The following is a 289-amino-acid chain: MSYVAAEPGVLISPTDDLQSPRSAPAAHDENADGITGGTRDDSAPNSRFQLGRRIPEATAQEGFLVRPFTQQCQIIHTEGDHAVIGVSPGNSYFSRQRLRDLGLWGLTNFDRVDFVYTDVHVAESYEALGDSAIEARRKAVKNIRGVRAKITTTVNELDPAGARLCVRPMSEFQSNEAYRELHADLLTRLKDDEDLRAVCQDLVRRFLSTKVGPRQGATATQEQVCMDYICAEAPLFLDTPAILGVPSSLNCYHQSLPLAEMLYARGSGLRASRNQGHAIVTPDGSPAE.

Residues 1-48 (MSYVAAEPGVLISPTDDLQSPRSAPAAHDENADGITGGTRDDSAPNSR) are disordered. Residue Ser88 is the Nucleophile of the active site. Substrate is bound by residues Asn91, 229 to 233 (YICAE), and Tyr253.

Belongs to the CDPS family. As to quaternary structure, homodimer.

It carries out the reaction 2 L-tyrosyl-tRNA(Tyr) = cyclo(L-tyrosyl-L-tyrosyl) + 2 tRNA(Tyr). Its function is as follows. Involved in the biosynthesis of mycocyclosin. It uses activated amino acids in the form of aminoacyl-tRNAs (aa-tRNAs) as substrates to catalyze the ATP-independent formation of cyclodipeptides which are intermediates in diketopiperazine (DKP) biosynthetic pathways. Catalyzes the formation of cyclo(L-Tyr-L-Tyr) (cYY) from L-tyrosyl-tRNA(Tyr). The chain is Cyclo(L-tyrosyl-L-tyrosyl) synthase from Mycobacterium tuberculosis (strain CDC 1551 / Oshkosh).